Here is a 183-residue protein sequence, read N- to C-terminus: Photosystem I assembly protein Ycf3 (183 aa).

TPR repeat units follow at residues 35-68 (AFIY…EIDS), 72-105 (SYIL…NSFL), and 120-153 (GEQA…SPDN).

It belongs to the Ycf3 family.

It is found in the plastid. Its subcellular location is the chloroplast thylakoid membrane. In terms of biological role, essential for the assembly of the photosystem I (PSI) complex. May act as a chaperone-like factor to guide the assembly of the PSI subunits. The protein is Photosystem I assembly protein Ycf3 of Adiantum capillus-veneris (Maidenhair fern).